Reading from the N-terminus, the 95-residue chain is ESAT-6-like protein EsxA (95 aa).

Belongs to the WXG100 family. ESAT-6 subfamily. As to quaternary structure, forms a tight 1:1 complex with EsxB. An artificial EsxA-EsxB heterodimer interacts with EspA.

The protein resides in the secreted. Its function is as follows. An exported protein. Unlike its M.tuberculosis counterpart has poor pore forming ability in artificial liposomes, does not undergo conformational change at acidic pH. Mutation of 2 residues to those found in M.tuberculosis (25-TA-26 to IH) alters the properties of this protein so that it inserts into liposomes at acidic pH, forming pores, like its M.tuberculosis counterpart. This is ESAT-6-like protein EsxA from Mycolicibacterium smegmatis (strain ATCC 700084 / mc(2)155) (Mycobacterium smegmatis).